The primary structure comprises 868 residues: Alanine--tRNA ligase (868 aa).

4 residues coordinate Zn(2+): His-555, His-559, Cys-657, and His-661. The interval 828–847 is disordered; the sequence is SQVGGKGGGRPDMAQAGGSE.

The protein belongs to the class-II aminoacyl-tRNA synthetase family. It depends on Zn(2+) as a cofactor.

It is found in the cytoplasm. It catalyses the reaction tRNA(Ala) + L-alanine + ATP = L-alanyl-tRNA(Ala) + AMP + diphosphate. Catalyzes the attachment of alanine to tRNA(Ala) in a two-step reaction: alanine is first activated by ATP to form Ala-AMP and then transferred to the acceptor end of tRNA(Ala). Also edits incorrectly charged Ser-tRNA(Ala) and Gly-tRNA(Ala) via its editing domain. This is Alanine--tRNA ligase from Pseudoalteromonas translucida (strain TAC 125).